The following is a 40-amino-acid chain: Photosystem II reaction center protein Y (40 aa).

A helical membrane pass occupies residues 5–23 (LVLVASPILLALGWAGFNI).

The protein belongs to the PsbY family. As to quaternary structure, PSII is composed of 1 copy each of membrane proteins PsbA, PsbB, PsbC, PsbD, PsbE, PsbF, PsbH, PsbI, PsbJ, PsbK, PsbL, PsbM, PsbT, PsbX, PsbY, PsbZ, Psb30/Ycf12, peripheral proteins PsbO, CyanoQ (PsbQ), PsbU, PsbV and a large number of cofactors. It forms dimeric complexes.

The protein localises to the cellular thylakoid membrane. Loosely associated component of the core of photosystem II (PSII), it is not always seen in crystals. PSII is a light-driven water plastoquinone oxidoreductase, using light energy to abstract electrons from H(2)O, generating a proton gradient subsequently used for ATP formation. This chain is Photosystem II reaction center protein Y, found in Synechococcus sp. (strain WH7803).